Here is a 148-residue protein sequence, read N- to C-terminus: Small ribosomal subunit protein uS12 (148 aa).

Belongs to the universal ribosomal protein uS12 family. As to quaternary structure, part of the 30S ribosomal subunit.

Functionally, with S4 and S5 plays an important role in translational accuracy. Located at the interface of the 30S and 50S subunits. The chain is Small ribosomal subunit protein uS12 from Methanocaldococcus jannaschii (strain ATCC 43067 / DSM 2661 / JAL-1 / JCM 10045 / NBRC 100440) (Methanococcus jannaschii).